We begin with the raw amino-acid sequence, 315 residues long: Ribosomal RNA small subunit methyltransferase H (315 aa).

Residues 37-39 (AGH), aspartate 57, tyrosine 84, aspartate 105, and glutamine 112 each bind S-adenosyl-L-methionine.

It belongs to the methyltransferase superfamily. RsmH family.

The protein localises to the cytoplasm. The enzyme catalyses cytidine(1402) in 16S rRNA + S-adenosyl-L-methionine = N(4)-methylcytidine(1402) in 16S rRNA + S-adenosyl-L-homocysteine + H(+). Functionally, specifically methylates the N4 position of cytidine in position 1402 (C1402) of 16S rRNA. This Lachnospira eligens (strain ATCC 27750 / DSM 3376 / VPI C15-48 / C15-B4) (Eubacterium eligens) protein is Ribosomal RNA small subunit methyltransferase H.